Consider the following 468-residue polypeptide: Nicotinamide phosphoribosyltransferase (468 aa).

Arg-180 lines the diphosphate pocket. Residue Asp-203 participates in beta-nicotinamide D-ribonucleotide binding. Residues His-229 and Arg-293 each contribute to the diphosphate site. His-229 carries the post-translational modification Phosphohistidine; by autocatalysis. 2 residues coordinate beta-nicotinamide D-ribonucleotide: Asp-335 and Arg-373.

Belongs to the NAPRTase family. As to quaternary structure, homodimer. The dimeric structure consists of two protomers arranged head to tail, with domain A on one protomer interacting with domain B on the other protomer. Post-translationally, phosphorylation at His-229 plays a crucial role in enhancing the substrate affinity and is important for maintaining enzymatic activity.

It carries out the reaction beta-nicotinamide D-ribonucleotide + diphosphate = 5-phospho-alpha-D-ribose 1-diphosphate + nicotinamide + H(+). It participates in cofactor biosynthesis; NAD(+) biosynthesis; nicotinamide D-ribonucleotide from 5-phospho-alpha-D-ribose 1-diphosphate and nicotinamide: step 1/1. Its activity is regulated as follows. ATP-dependent autophosphorylation plays a vital role in nicotinamide binding and enzyme activation. Activity is inhibited by FK866. Its function is as follows. Catalyzes the condensation of nicotinamide with 5-phosphoribosyl-1-pyrophosphate to yield nicotinamide mononucleotide, an intermediate in the biosynthesis of NAD. Plays an important role in the biosynthesis of NAD via the nicotinamide (NAM) salvage pathway. Is also capable of hydrolyzing ATP and shows ATP-dependent autophosphorylation activity. In Xanthomonas campestris pv. campestris (strain 8004), this protein is Nicotinamide phosphoribosyltransferase.